The primary structure comprises 152 residues: D-aminoacyl-tRNA deacylase (152 aa).

A Gly-cisPro motif, important for rejection of L-amino acids motif is present at residues 142-143; sequence GP.

Belongs to the DTD family. In terms of assembly, homodimer.

The protein resides in the cytoplasm. It catalyses the reaction glycyl-tRNA(Ala) + H2O = tRNA(Ala) + glycine + H(+). The catalysed reaction is a D-aminoacyl-tRNA + H2O = a tRNA + a D-alpha-amino acid + H(+). Functionally, an aminoacyl-tRNA editing enzyme that deacylates mischarged D-aminoacyl-tRNAs. Also deacylates mischarged glycyl-tRNA(Ala), protecting cells against glycine mischarging by AlaRS. Acts via tRNA-based rather than protein-based catalysis; rejects L-amino acids rather than detecting D-amino acids in the active site. By recycling D-aminoacyl-tRNA to D-amino acids and free tRNA molecules, this enzyme counteracts the toxicity associated with the formation of D-aminoacyl-tRNA entities in vivo and helps enforce protein L-homochirality. In Paraburkholderia xenovorans (strain LB400), this protein is D-aminoacyl-tRNA deacylase.